The following is a 376-amino-acid chain: Deoxyguanosinetriphosphate triphosphohydrolase-like protein (376 aa).

One can recognise an HD domain in the interval 62–198; sequence RLTHSLEVSA…AALADDISYI (137 aa).

The protein belongs to the dGTPase family. Type 2 subfamily.

The protein is Deoxyguanosinetriphosphate triphosphohydrolase-like protein of Rickettsia canadensis (strain McKiel).